The primary structure comprises 365 residues: Peptidyl-prolyl cis-trans isomerase FKBP42 (365 aa).

Residues 1–15 are compositionally biased toward basic and acidic residues; that stretch reads MDESLEHQTQTHDQE. The interval 1 to 44 is disordered; sequence MDESLEHQTQTHDQESEIVTEGSAVVHSEPSQEGNVPPKVDSEA. The tract at residues 1–163 is interaction with MDR1/PGP1; the sequence is MDESLEHQTQ…EVIGFDETKE (163 aa). Residues 67–159 enclose the PPIase FKBP-type domain; sequence YSTCFLHYRA…LYEVEVIGFD (93 aa). The tract at residues 163 to 337 is interaction with MRP1; that stretch reads EGKARSDMTV…GKDEGGAKSK (175 aa). TPR repeat units follow at residues 179–212, 230–263, and 264–297; these read ADRRKMDGNSLFKEEKLEEAMQQYEMAIAYMGDD, NPCHLNIAACLIKLKRYDEAIGHCNIVLTEEEKN, and PKALFRRGKAKAELGQMDSARDDFRKAQKYAPDD. The calmodulin-binding stretch occupies residues 310-326; it reads QEKALYQKQKEMYKGIF. Residues 338 to 357 form a helical; Anchor for type IV membrane protein membrane-spanning segment; that stretch reads SLFWLIVLWQWFVSLFSRIF.

This sequence belongs to the FKBP-type PPIase family. Interacts with calmodulin (CaM), MRP1, MRP2, MDR1/PGP1, MDR11/PGP19 and SHD/HSP90. Interacts with 1-naphthylphthalamic acid (NPA).

Its subcellular location is the cell membrane. The protein resides in the vacuole membrane. It is found in the endoplasmic reticulum. The catalysed reaction is [protein]-peptidylproline (omega=180) = [protein]-peptidylproline (omega=0). In terms of biological role, PPIases accelerate the folding of proteins. It catalyzes the cis-trans isomerization of proline imidic peptide bonds in oligopeptides. Modulates the uptake of MRP substrates into the vacuole; reduces metolachlor-GS (MOC-GS) and enhances 17-beta-estradiol 17-(beta-D-glucuronide) (E(2)17betaG) uptake. Regulates cell elongation and orientation. Functions as a positive regulator of PGP1-mediated auxin transport. Confers drug modulation of PGP1 efflux activity as interaction with NPA or flavonol quercetin prevents its physical and functional interaction with PGP1. Required for the proper localization of auxin-related ABCB transporters. Plays a role in brassinosteroid (BR) signaling pathway. Required for seed development by promoting stamen elongation and, to a lesser extent, anther dehiscence and pollen maturation, probably as a chaperone helping ABCB1 and ABCB19 auxin transporters localization and activation. Involved in auxin signaling in nectaries to promote starch accumulation to attract visiting pollinators. The sequence is that of Peptidyl-prolyl cis-trans isomerase FKBP42 from Arabidopsis thaliana (Mouse-ear cress).